A 239-amino-acid polypeptide reads, in one-letter code: Pyridoxine 5'-phosphate synthase (239 aa).

Asn-7 is a 3-amino-2-oxopropyl phosphate binding site. Position 9–10 (9–10 (DH)) interacts with 1-deoxy-D-xylulose 5-phosphate. A 3-amino-2-oxopropyl phosphate-binding site is contributed by Arg-18. His-43 (proton acceptor) is an active-site residue. Residues Arg-45 and His-50 each contribute to the 1-deoxy-D-xylulose 5-phosphate site. Catalysis depends on Glu-70, which acts as the Proton acceptor. Thr-100 lines the 1-deoxy-D-xylulose 5-phosphate pocket. The active-site Proton donor is His-191. 3-amino-2-oxopropyl phosphate contacts are provided by residues Gly-192 and 213–214 (GH).

Belongs to the PNP synthase family. As to quaternary structure, homooctamer; tetramer of dimers.

The protein localises to the cytoplasm. It catalyses the reaction 3-amino-2-oxopropyl phosphate + 1-deoxy-D-xylulose 5-phosphate = pyridoxine 5'-phosphate + phosphate + 2 H2O + H(+). It functions in the pathway cofactor biosynthesis; pyridoxine 5'-phosphate biosynthesis; pyridoxine 5'-phosphate from D-erythrose 4-phosphate: step 5/5. Catalyzes the complicated ring closure reaction between the two acyclic compounds 1-deoxy-D-xylulose-5-phosphate (DXP) and 3-amino-2-oxopropyl phosphate (1-amino-acetone-3-phosphate or AAP) to form pyridoxine 5'-phosphate (PNP) and inorganic phosphate. This Gloeobacter violaceus (strain ATCC 29082 / PCC 7421) protein is Pyridoxine 5'-phosphate synthase.